A 558-amino-acid polypeptide reads, in one-letter code: Protein SET DOMAIN GROUP 41 (558 aa).

In terms of domain architecture, SET spans 115–249; the sequence is PSISVAIHHA…SGEEITVSYI (135 aa).

It belongs to the class V-like SAM-binding methyltransferase superfamily.

This chain is Protein SET DOMAIN GROUP 41 (SDG41), found in Arabidopsis thaliana (Mouse-ear cress).